The sequence spans 197 residues: Pyridoxal 5'-phosphate synthase subunit PdxT (197 aa).

53-55 is an L-glutamine binding site; it reads GES. The active-site Nucleophile is the Cys85. Residues Arg114 and 142 to 143 contribute to the L-glutamine site; that span reads IR. Active-site charge relay system residues include His179 and Glu181.

The protein belongs to the glutaminase PdxT/SNO family. In the presence of PdxS, forms a dodecamer of heterodimers. Only shows activity in the heterodimer.

It catalyses the reaction aldehydo-D-ribose 5-phosphate + D-glyceraldehyde 3-phosphate + L-glutamine = pyridoxal 5'-phosphate + L-glutamate + phosphate + 3 H2O + H(+). It carries out the reaction L-glutamine + H2O = L-glutamate + NH4(+). Its pathway is cofactor biosynthesis; pyridoxal 5'-phosphate biosynthesis. In terms of biological role, catalyzes the hydrolysis of glutamine to glutamate and ammonia as part of the biosynthesis of pyridoxal 5'-phosphate. The resulting ammonia molecule is channeled to the active site of PdxS. The chain is Pyridoxal 5'-phosphate synthase subunit PdxT from Thermococcus gammatolerans (strain DSM 15229 / JCM 11827 / EJ3).